A 448-amino-acid chain; its full sequence is Tubulin beta chain (448 aa).

Residues Q11, E69, S138, G142, T143, G144, N204, and N226 each coordinate GTP. E69 serves as a coordination point for Mg(2+). A disordered region spans residues Q426 to E448. The segment covering G429–E448 has biased composition (acidic residues).

Belongs to the tubulin family. As to quaternary structure, dimer of alpha and beta chains. A typical microtubule is a hollow water-filled tube with an outer diameter of 25 nm and an inner diameter of 15 nM. Alpha-beta heterodimers associate head-to-tail to form protofilaments running lengthwise along the microtubule wall with the beta-tubulin subunit facing the microtubule plus end conferring a structural polarity. Microtubules usually have 13 protofilaments but different protofilament numbers can be found in some organisms and specialized cells. Mg(2+) is required as a cofactor.

It localises to the cytoplasm. The protein localises to the cytoskeleton. Its function is as follows. Tubulin is the major constituent of microtubules, a cylinder consisting of laterally associated linear protofilaments composed of alpha- and beta-tubulin heterodimers. Microtubules grow by the addition of GTP-tubulin dimers to the microtubule end, where a stabilizing cap forms. Below the cap, tubulin dimers are in GDP-bound state, owing to GTPase activity of alpha-tubulin. The polypeptide is Tubulin beta chain (TUB2) (Epichloe coenophiala (Tall fescue endophyte fungus)).